Reading from the N-terminus, the 3750-residue chain is Cubilin homolog (3750 aa).

Residues 1–28 form the signal peptide; that stretch reads MEGAARSRLLLCWTLLAIITDTWPIAEG. N51 and N123 each carry an N-linked (GlcNAc...) asparagine glycan. Residues 154–190 form the EGF-like 1 domain; the sequence is EANSCASGPCENGGTCYNTYTGFRCQCRSAFEGTKCE. Disulfide bonds link C158/C169, C163/C178, C180/C189, C196/C212, C206/C221, and C223/C232. In terms of domain architecture, EGF-like 2; calcium-binding spans 192-233; sequence DVNECALYEGTDLGCQNGGQCQNHFGTYSCLCQPGWHGMHCT. In terms of domain architecture, EGF-like 3; calcium-binding spans 282–308; it reads DVDECSDSAAHKPCSTSCINLPGSFTC. The EGF-like 4; calcium-binding domain occupies 324-352; sequence DLDECQTNNGGCSLSPKVDCINTYGSYHC. The N-linked (GlcNAc...) asparagine glycan is linked to N424. 2 consecutive EGF-like domains span residues 426–463 and 465–503; these read TTTN…PICE and QPSP…RLCE. Cystine bridges form between C430/C441, C435/C451, C453/C462, C469/C480, C474/C491, C493/C502, and C509/C535. N-linked (GlcNAc...) asparagine glycosylation is present at N448. CUB domains lie at 509–623, 627–738, 744–852, 853–971, 978–1095, 1100–1212, 1216–1331, 1332–1434, 1439–1550, 1554–1670, 1671–1788, 1792–1902, and 1903–2001; these read CNGM…WNSM, CGGR…YSVE, CGGV…YRMA, CDYK…YRAL, CGGV…YTFE, CGGH…WRIF, CGGS…YKAN, CIRN…QLDY, CMEE…YRTV, CGGK…FHES, CGQT…YMTM, CGSI…YNYE, and HHNE…WNRL. N-linked (GlcNAc...) asparagine glycans are attached at residues N542 and N548. C562 and C584 form a disulfide bridge. N609 carries N-linked (GlcNAc...) asparagine glycosylation. 6 cysteine pairs are disulfide-bonded: C627/C654, C681/C701, C744/C770, C853/C879, C913/C933, and C978/C1004. N-linked (GlcNAc...) asparagine glycosylation occurs at N871. Positions 1026, 1034, and 1080 each coordinate Ca(2+). A disulfide bond links C1031 and C1058. An intrachain disulfide couples C1100 to C1126. N1119 carries N-linked (GlcNAc...) asparagine glycosylation. E1148 is a Ca(2+) binding site. The N-linked (GlcNAc...) asparagine glycan is linked to N1152. C1153 and C1175 are joined by a disulfide. 2 residues coordinate Ca(2+): D1156 and D1197. C1216 and C1242 are disulfide-bonded. Ca(2+) contacts are provided by E1264, D1272, and D1316. A disulfide bridge connects residues C1269 and C1292. The cysteines at positions 1332 and 1360 are disulfide-linked. N1335, N1359, N1413, and N1424 each carry an N-linked (GlcNAc...) asparagine glycan. C1439 and C1465 are oxidised to a cystine. The N-linked (GlcNAc...) asparagine glycan is linked to N1491. Cystine bridges form between C1492–C1513, C1554–C1580, C1607–C1631, C1671–C1697, C1733–C1755, C1792–C1818, and C1845–C1866. The N-linked (GlcNAc...) asparagine glycan is linked to N1694. 2 N-linked (GlcNAc...) asparagine glycosylation sites follow: N1908 and N2009. Cystine bridges form between C2019-C2048 and C2077-C2100. CUB domains are found at residues 2019 to 2139, 2140 to 2256, 2262 to 2383, 2385 to 2512, and 2516 to 2646; these read CGNQ…VRTA, CGSE…FRFE, DSGR…LSVA, CGGS…YTSL, and CGET…MNEV. N2092, N2128, N2152, and N2231 each carry an N-linked (GlcNAc...) asparagine glycan. The cysteines at positions 2140 and 2167 are disulfide-linked. An intrachain disulfide couples C2324 to C2346. Residue N2377 is glycosylated (N-linked (GlcNAc...) asparagine). C2385 and C2416 are joined by a disulfide. N-linked (GlcNAc...) asparagine glycosylation is present at N2442. 2 cysteine pairs are disulfide-bonded: C2445/C2474 and C2516/C2542. 4 N-linked (GlcNAc...) asparagine glycosylation sites follow: N2655, N2671, N2682, and N2772. 2 cysteine pairs are disulfide-bonded: C2761–C2790 and C2837–C2859. 8 consecutive CUB domains span residues 2761 to 2895, 2898 to 3010, 3011 to 3128, 3130 to 3246, 3249 to 3364, 3368 to 3512, 3522 to 3615, and 3623 to 3736; these read CGGV…IKYG, CGGK…FERN, CGGL…YTSR, CGGI…VRVM, CDEK…INAI, CGSS…VALN, LQGR…YLAS, and CGGQ…FAGV. Residues N2885 and N2889 are each glycosylated (N-linked (GlcNAc...) asparagine). Cystine bridges form between C2898-C2921 and C2949-C2973. N-linked (GlcNAc...) asparagine glycosylation is found at N2960, N2965, and N2982. C3011 and C3039 form a disulfide bridge. N-linked (GlcNAc...) asparagine glycosylation is found at N3040 and N3074. 2 cysteine pairs are disulfide-bonded: C3070–C3092 and C3130–C3157. The N-linked (GlcNAc...) asparagine glycan is linked to N3160. 4 disulfide bridges follow: C3184-C3207, C3249-C3278, C3305-C3327, and C3368-C3402. The N-linked (GlcNAc...) asparagine glycan is linked to N3256. N3427 carries N-linked (GlcNAc...) asparagine glycosylation. A disulfide bond links C3430 and C3475. N-linked (GlcNAc...) asparagine glycosylation is found at N3543, N3572, and N3645. 3 cysteine pairs are disulfide-bonded: C3560/C3579, C3623/C3649, and C3676/C3699.

In terms of tissue distribution, specifically expressed in nephrocytes.

The protein localises to the cell membrane. Required in the nephrocyte for normal uptake of proteins and elimination of toxins, and for maintenance of endocytic trafficking structures. May function together with Amnionless. This is Cubilin homolog from Drosophila melanogaster (Fruit fly).